The sequence spans 757 residues: Exo-alpha-(1-&gt;6)-L-arabinopyranosidase (757 aa).

Residue Asp-232 is part of the active site.

This sequence belongs to the glycosyl hydrolase 3 family. In terms of assembly, homotetramer.

Completely inhibited by Cu(2+) and Fe(2+). Catalyzes the hydrolysis of a non-reducing terminal alpha-L-arabinopyranosidic linkage in ginsenoside Rb2 (alpha-L-arabinopyranosyl-(1-&gt;6)-alpha-D-glucopyranosyl) to release alpha-D-glucopyranosyl (Rd). It is not able to hydrolyze alpha-L-arabinofuranosyl-(1-&gt;6)-alpha-D-glucopyranosyl (Rc). This Bifidobacterium breve (strain ACS-071-V-Sch8b) protein is Exo-alpha-(1-&gt;6)-L-arabinopyranosidase.